A 764-amino-acid polypeptide reads, in one-letter code: Semaphorin-3D (764 aa).

Residues 1–41 form the signal peptide; it reads MKTAGEPDRRRQRRQVRTGRFSCAWWSTSVMLFFSLPEGNC. One can recognise a Sema domain in the interval 48 to 535; the sequence is RVKLGYKDLI…GSDGLVQVSL (488 aa). Cysteine 121 and cysteine 132 are disulfide-bonded. Residue asparagine 143 is glycosylated (N-linked (GlcNAc...) asparagine). Intrachain disulfides connect cysteine 150/cysteine 159, cysteine 290/cysteine 402, and cysteine 314/cysteine 362. An N-linked (GlcNAc...) asparagine glycan is attached at asparagine 490. A disulfide bond links cysteine 538 and cysteine 556. Residue asparagine 610 is glycosylated (N-linked (GlcNAc...) asparagine). Residues 661 to 740 enclose the Ig-like C2-type domain; it reads GDAGSYFCTS…EYCETMWHRE (80 aa). Residues cysteine 668 and cysteine 733 are joined by a disulfide bond. The tract at residues 743–764 is disordered; it reads QKQKGKWKHVQELRKSRNRRHH.

This sequence belongs to the semaphorin family.

The protein localises to the secreted. Its function is as follows. May play a role in the guidance of several axon pathways. The protein is Semaphorin-3D (sema3d) of Danio rerio (Zebrafish).